The primary structure comprises 98 residues: Putative pterin-4-alpha-carbinolamine dehydratase (98 aa).

It belongs to the pterin-4-alpha-carbinolamine dehydratase family.

The catalysed reaction is (4aS,6R)-4a-hydroxy-L-erythro-5,6,7,8-tetrahydrobiopterin = (6R)-L-erythro-6,7-dihydrobiopterin + H2O. This chain is Putative pterin-4-alpha-carbinolamine dehydratase, found in Roseobacter denitrificans (strain ATCC 33942 / OCh 114) (Erythrobacter sp. (strain OCh 114)).